We begin with the raw amino-acid sequence, 214 residues long: ATP-dependent Clp protease proteolytic subunit (214 aa).

The active-site Nucleophile is Ser-110. The active site involves His-135.

The protein belongs to the peptidase S14 family. As to quaternary structure, fourteen ClpP subunits assemble into 2 heptameric rings which stack back to back to give a disk-like structure with a central cavity, resembling the structure of eukaryotic proteasomes.

It localises to the cytoplasm. It carries out the reaction Hydrolysis of proteins to small peptides in the presence of ATP and magnesium. alpha-casein is the usual test substrate. In the absence of ATP, only oligopeptides shorter than five residues are hydrolyzed (such as succinyl-Leu-Tyr-|-NHMec, and Leu-Tyr-Leu-|-Tyr-Trp, in which cleavage of the -Tyr-|-Leu- and -Tyr-|-Trp bonds also occurs).. In terms of biological role, cleaves peptides in various proteins in a process that requires ATP hydrolysis. Has a chymotrypsin-like activity. Plays a major role in the degradation of misfolded proteins. The polypeptide is ATP-dependent Clp protease proteolytic subunit (Legionella pneumophila (strain Paris)).